We begin with the raw amino-acid sequence, 277 residues long: NLP effector protein Pc109174 (277 aa).

The signal sequence occupies residues 1–19; it reads MNLVPALVLLLALAQTVLG. A Hepta-peptide GHRHDWE motif motif is present at residues 119–125; it reads KSRHLWA. Asn-199 carries N-linked (GlcNAc...) asparagine glycosylation.

It belongs to the Necrosis inducing protein (NPP1) family.

The protein localises to the secreted. Its function is as follows. Secreted effector that contributes strongly to virulence during infection by P.capsici. Induces cell death in the Solanaceae, including hot pepper. The polypeptide is NLP effector protein Pc109174 (Phytophthora capsici).